A 325-amino-acid polypeptide reads, in one-letter code: Fatty acid synthase alpha subunit hexA (325 aa).

Asp-209 provides a ligand contact to Mg(2+). Residues 209–211 (DLV), 255–265 (EAVFKCLHTQT), 279–282 (KSDN), and 301–303 (ISH) contribute to the acetyl-CoA site. Ser-302 serves as a coordination point for Mg(2+).

This sequence belongs to the thiolase-like superfamily. Fungal fatty acid synthetase subunit alpha family. As to quaternary structure, [Alpha(6)beta(6)] hexamers of two multifunctional subunits (alpha and beta). 4'-phosphopantetheine is transferred from CoA to a specific serine of the acyl carrier domain by the C-terminal PPT domain. This modification is essential for activity because fatty acids are bound in thioester linkage to the sulfhydryl of the prosthetic group.

It carries out the reaction acetyl-CoA + n malonyl-CoA + 2n NADPH + 4n H(+) = a long-chain-acyl-CoA + n CoA + n CO2 + 2n NADP(+).. The catalysed reaction is a fatty acyl-[ACP] + malonyl-[ACP] + H(+) = a 3-oxoacyl-[ACP] + holo-[ACP] + CO2. The enzyme catalyses a (3R)-hydroxyacyl-[ACP] + NADP(+) = a 3-oxoacyl-[ACP] + NADPH + H(+). The protein operates within mycotoxin biosynthesis. Functionally, fatty acid synthase alpha subunit; part of the fragmented gene cluster that mediates the biosynthesis of dothistromin (DOTH), a polyketide toxin very similar in structure to the aflatoxin precursor, versicolorin B. The first step of the pathway is the conversion of acetate to norsolorinic acid (NOR) and requires the fatty acid synthase subunits hexA and hexB, as well as the polyketide synthase pksA. PksA combines a hexanoyl starter unit and 7 malonyl-CoA extender units to synthesize the precursor NOR. The hexanoyl starter unit is provided to the acyl-carrier protein (ACP) domain by the fungal fatty acid synthase hexA/hexB. The second step is the conversion of NOR to averantin (AVN) and requires the norsolorinic acid ketoreductase nor1, which catalyzes the dehydration of norsolorinic acid to form (1'S)-averantin. The cytochrome P450 monooxygenase avnA then catalyzes the hydroxylation of AVN to 5'hydroxyaverantin (HAVN). The next step is performed by adhA that transforms HAVN to averufin (AVF). Averufin might then be converted to hydroxyversicolorone by cypX and avfA. Hydroxyversicolorone is further converted versiconal hemiacetal acetate (VHA) by moxY. VHA is then the substrate for the versiconal hemiacetal acetate esterase est1 to yield versiconal (VAL). Versicolorin B synthase vbsA then converts VAL to versicolorin B (VERB) by closing the bisfuran ring. Then, the activity of the versicolorin B desaturase verB leads to versicolorin A (VERA). DotB, a predicted chloroperoxidase, may perform epoxidation of the A-ring of VERA. Alternatively, a cytochrome P450, such as cypX or avnA could catalyze this step. It is also possible that another, uncharacterized, cytochrome P450 enzyme is responsible for this step. Opening of the epoxide could potentially be achieved by the epoxide hydrolase epoA. However, epoA seems not to be required for DOTH biosynthesis, but other epoxide hydrolases may have the ability to complement this hydrolysis. Alternatively, opening of the epoxide ring could be achieved non-enzymatically. The next step is the deoxygenation of ring A to yield the 5,8-dihydroxyanthraquinone which is most likely catalyzed by the NADPH dehydrogenase encoded by ver1. The last stages of DOTH biosynthesis are proposed to involve hydroxylation of the bisfuran. OrdB and norB might have oxidative roles here. An alternative possibility is that cytochrome P450 monoogenases such as avnA and cypX might perform these steps in addition to previously proposed steps. The protein is Fatty acid synthase alpha subunit hexA of Dothistroma septosporum (Red band needle blight fungus).